The following is a 240-amino-acid chain: Urease accessory protein UreF (240 aa).

Belongs to the UreF family. In terms of assembly, ureD, UreF and UreG form a complex that acts as a GTP-hydrolysis-dependent molecular chaperone, activating the urease apoprotein by helping to assemble the nickel containing metallocenter of UreC. The UreE protein probably delivers the nickel.

Its subcellular location is the cytoplasm. In terms of biological role, required for maturation of urease via the functional incorporation of the urease nickel metallocenter. This chain is Urease accessory protein UreF, found in Bradyrhizobium sp. (strain BTAi1 / ATCC BAA-1182).